The chain runs to 212 residues: Ribonuclease HII (212 aa).

The RNase H type-2 domain occupies 1-206 (MARFGVDEAG…SRDALGAAEQ (206 aa)). A divalent metal cation is bound by residues D7, E8, and D100.

It belongs to the RNase HII family. It depends on Mn(2+) as a cofactor. The cofactor is Mg(2+).

The protein localises to the cytoplasm. The enzyme catalyses Endonucleolytic cleavage to 5'-phosphomonoester.. Its function is as follows. Endonuclease that specifically degrades the RNA of RNA-DNA hybrids. This Halobacterium salinarum (strain ATCC 29341 / DSM 671 / R1) protein is Ribonuclease HII.